A 365-amino-acid chain; its full sequence is Chorismate synthase (365 aa).

Arg46 contacts NADP(+). FMN contacts are provided by residues 123-125, 241-242, Gly281, 296-300, and Arg322; these read RSS, NG, and KPTPS.

It belongs to the chorismate synthase family. In terms of assembly, homotetramer. The cofactor is FMNH2.

The catalysed reaction is 5-O-(1-carboxyvinyl)-3-phosphoshikimate = chorismate + phosphate. The protein operates within metabolic intermediate biosynthesis; chorismate biosynthesis; chorismate from D-erythrose 4-phosphate and phosphoenolpyruvate: step 7/7. Catalyzes the anti-1,4-elimination of the C-3 phosphate and the C-6 proR hydrogen from 5-enolpyruvylshikimate-3-phosphate (EPSP) to yield chorismate, which is the branch point compound that serves as the starting substrate for the three terminal pathways of aromatic amino acid biosynthesis. This reaction introduces a second double bond into the aromatic ring system. The sequence is that of Chorismate synthase from Helicobacter pylori (strain J99 / ATCC 700824) (Campylobacter pylori J99).